The sequence spans 1146 residues: Transcription-repair-coupling factor (1146 aa).

The 162-residue stretch at 617 to 778 (DMCQPKAMDR…MNGIRDLSII (162 aa)) folds into the Helicase ATP-binding domain. Residue 630 to 637 (GDVGFGKT) coordinates ATP. Residues 731–734 (DEEH) carry the DEEH box motif. The Helicase C-terminal domain maps to 800–953 (VREAILREIL…GFILATHDLE (154 aa)).

This sequence in the N-terminal section; belongs to the UvrB family. It in the C-terminal section; belongs to the helicase family. RecG subfamily.

It localises to the cytoplasm. In terms of biological role, couples transcription and DNA repair by recognizing RNA polymerase (RNAP) stalled at DNA lesions. Mediates ATP-dependent release of RNAP and its truncated transcript from the DNA, and recruitment of nucleotide excision repair machinery to the damaged site. This is Transcription-repair-coupling factor from Haemophilus influenzae (strain ATCC 51907 / DSM 11121 / KW20 / Rd).